A 250-amino-acid polypeptide reads, in one-letter code: MGDYWLNEHDNIVKLINSLTADIKEYSIQQRNNPGIVQKNTPAKLRNGLVHITNEILRLQDSLTYGNNRNIQEKELLRRKNKVESLISMKNQLNSTLDAAINNTSQKNELMGNNNGVGIGYSNRQFGKPKETEATKQFDNQQLFTNQQHIMREQDESLDLLSQSIMRQKNMAHAMSNELDQHNEMLDDVEIGTDAVSMRLRNANRRMETIKQNAGSTCMIVCIVILIILIVVLIATDSGCKIYNDPKHCP.

The Cytoplasmic segment spans residues 1–213 (MGDYWLNEHD…NRRMETIKQN (213 aa)). Positions 73 to 100 (EKELLRRKNKVESLISMKNQLNSTLDAA) form a coiled coil. Residues 148-210 (QHIMREQDES…RNANRRMETI (63 aa)) form the t-SNARE coiled-coil homology domain. Residues 214–234 (AGSTCMIVCIVILIILIVVLI) traverse the membrane as a helical; Anchor for type IV membrane protein segment. The Vesicular portion of the chain corresponds to 235 to 250 (ATDSGCKIYNDPKHCP).

It belongs to the syntaxin family.

It localises to the membrane. The sequence is that of Probable syntaxin-8B (syn8B) from Dictyostelium discoideum (Social amoeba).